The chain runs to 129 residues: Mediator of RNA polymerase II transcription subunit 31-B (129 aa).

Belongs to the Mediator complex subunit 31 family. Component of the Mediator complex.

The protein resides in the nucleus. Component of the Mediator complex, a coactivator involved in the regulated transcription of nearly all RNA polymerase II-dependent genes. Mediator functions as a bridge to convey information from gene-specific regulatory proteins to the basal RNA polymerase II transcription machinery. Mediator is recruited to promoters by direct interactions with regulatory proteins and serves as a scaffold for the assembly of a functional preinitiation complex with RNA polymerase II and the general transcription factors. This chain is Mediator of RNA polymerase II transcription subunit 31-B (med31-b), found in Xenopus laevis (African clawed frog).